Consider the following 822-residue polypeptide: Glycerol-3-phosphate acyltransferase (822 aa).

The HXXXXD motif signature appears at 304–309 (CHRSHM).

It belongs to the GPAT/DAPAT family.

It localises to the cell inner membrane. The catalysed reaction is sn-glycerol 3-phosphate + an acyl-CoA = a 1-acyl-sn-glycero-3-phosphate + CoA. It functions in the pathway phospholipid metabolism; CDP-diacylglycerol biosynthesis; CDP-diacylglycerol from sn-glycerol 3-phosphate: step 1/3. This is Glycerol-3-phosphate acyltransferase from Yersinia enterocolitica serotype O:8 / biotype 1B (strain NCTC 13174 / 8081).